Here is a 95-residue protein sequence, read N- to C-terminus: Antitoxin VapB41 (95 aa).

Functionally, antitoxin component of a type II toxin-antitoxin (TA) system. The chain is Antitoxin VapB41 (vapB41) from Mycobacterium tuberculosis (strain CDC 1551 / Oshkosh).